The chain runs to 199 residues: Protein CPL1 (199 aa).

An N-terminal signal peptide occupies residues 1–30; the sequence is MFSIPPSVRRLVFLFLIAAPLLSIVLPVAA. Positions 34–58 are disordered; the sequence is GVDPPSKLQPRAPQPSRRMGATKRS. A glycan (N-linked (GlcNAc...) asparagine) is linked at N148.

The protein localises to the secreted. In terms of biological role, virulence factor which promotes fungal virulence by enhancing type 2 inflammation in the mouse host. Likely binds mouse Tlr4 independently of Ly96/Md2 and activates Tlr4 signaling to drive Stat3 phosphorylation in interstitial macrophages, which promotes the initial induction of Arg1/arginase-1 and increases macrophage sensitivity to Il4 signaling. This chain is Protein CPL1, found in Cryptococcus neoformans var. grubii serotype A (strain H99 / ATCC 208821 / CBS 10515 / FGSC 9487) (Filobasidiella neoformans var. grubii).